Reading from the N-terminus, the 875-residue chain is Metal transporter CNNM2 (875 aa).

Residues 1–250 (MIGCGACEPE…TKMIVGEEKK (250 aa)) are Extracellular-facing. N-linked (GlcNAc...) asparagine glycosylation occurs at N112. Residues 121 to 149 (TEHERRRHTPSERGLGGPAPPEPDSGPQR) are disordered. The helical transmembrane segment at 251–271 (FLLPFWLQVIFISLLLCLSGM) threads the bilayer. Residues 251–431 (FLLPFWLQVI…DPYNDLVKEE (181 aa)) form the CNNM transmembrane domain. Residues 272 to 313 (FSGLNLGLMALDPMELRIVQNCGTEKEKNYAKRIEPVRRQGN) are Cytoplasmic-facing. The helical intramembrane region spans 314 to 334 (YLLCSLLLGNVLVNTTLTILL). Over 335-338 (DDIA) the chain is Cytoplasmic. A helical membrane pass occupies residues 339–359 (GSGLVAVVVSTIGIVIFGEIV). Residues 360 to 368 (PQAICSRHG) lie on the Extracellular side of the membrane. A helical membrane pass occupies residues 369–389 (LAVGANTIFLTKFFMMMTFPA). Residues 390-875 (SYPVSKLLDC…NHSLHSEGAI (486 aa)) lie on the Cytoplasmic side of the membrane. 2 CBS domains span residues 450–511 (MTPL…CTPL) and 518–584 (YNHP…ILDE). Residues 741–763 (AGSPGENKSPPRPCGLNHSDSLS) form a disordered region. The residue at position 761 (S761) is a Phosphoserine.

This sequence belongs to the ACDP family. Isoform 1 and isoform 2 may interact with each other. The N-terminus is cleaved within the endoplasmic reticulum. The signal peptidase complex seems to be involved in the processing, but the exact cleavage site has not been identified. In terms of tissue distribution, widely expressed, with highest levels in kidney, lung, spleen and testis. In the kidney, predominantly expressed in the distal convoluted tubule and, at lower levels, in the connecting tubule (at protein level).

It is found in the cell membrane. In terms of biological role, divalent metal cation transporter. Mediates transport of divalent metal cations in an order of Mg(2+) &gt; Co(2+) &gt; Mn(2+) &gt; Sr(2+) &gt; Ba(2+) &gt; Cu(2+) &gt; Fe(2+). The protein is Metal transporter CNNM2 (Cnnm2) of Mus musculus (Mouse).